Consider the following 821-residue polypeptide: Phenylalanine--tRNA ligase beta subunit (821 aa).

One can recognise a tRNA-binding domain in the interval 39–149; that stretch reads SENVKGIVLG…EDIALNHNLG (111 aa). The B5 domain maps to 414–507; that stretch reads LKKILIPLRR…RLIGYDMFDL (94 aa). Asp-485, Asp-491, Glu-494, and Glu-495 together coordinate Mg(2+). One can recognise an FDX-ACB domain in the interval 727–820; the sequence is PTVPKMERDI…IEKKFSTKLR (94 aa).

It belongs to the phenylalanyl-tRNA synthetase beta subunit family. Type 1 subfamily. Tetramer of two alpha and two beta subunits. The cofactor is Mg(2+).

The protein resides in the cytoplasm. The enzyme catalyses tRNA(Phe) + L-phenylalanine + ATP = L-phenylalanyl-tRNA(Phe) + AMP + diphosphate + H(+). This is Phenylalanine--tRNA ligase beta subunit from Prochlorococcus marinus subsp. pastoris (strain CCMP1986 / NIES-2087 / MED4).